An 832-amino-acid chain; its full sequence is Receptor-interacting serine/threonine-protein kinase 4 (832 aa).

The Protein kinase domain occupies Phe-22–Ile-286. ATP is bound by residues Val-28–Val-36 and Lys-51. A Glycyl lysine isopeptide (Lys-Gly) (interchain with G-Cter in ubiquitin) cross-link involves residue Lys-51. The active-site Proton acceptor is Asp-143. Residue Lys-145 forms a Glycyl lysine isopeptide (Lys-Gly) (interchain with G-Cter in ubiquitin) linkage. Disordered regions lie at residues Gln-325–Arg-368 and Ser-389–Ser-424. Residues Ser-329–Val-342 show a composition bias toward acidic residues. Basic and acidic residues predominate over residues Lys-343–Ser-359. Residues Arg-403–Ser-424 are compositionally biased toward low complexity. ANK repeat units lie at residues Ser-485–Leu-514, Arg-518–Ala-547, Asp-551–Glu-580, Glu-584–Leu-613, Asp-617–Ala-647, Asp-651–Val-680, Leu-684–Ala-713, Asp-717–Ala-746, Leu-750–Asp-780, and Gln-782–Leu-811.

This sequence belongs to the protein kinase superfamily. TKL Ser/Thr protein kinase family. As to quaternary structure, interacts with PRKCB. Interacts with TRAF1, TRAF2, TRAF3 and TRAF5. Interacts with BIRC2/c-IAP1, BIRC3/c-IAP2 and XIAP/BIRC4. Post-translationally, may be phosphorylated by MAP3K2 and MAP3K3. Proteolytically cleaved by during Fas-induced apoptosis. Cleavage at Asp-388 and Asp-426. In terms of processing, polyubiquitinated with 'Lys-48' and 'Lys-63'-linked chains by BIRC2/c-IAP1 and BIRC3/c-IAP2, leading to activation of NF-kappa-B. As to expression, expressed in hair follicles and skin.

It is found in the cytoplasm. The protein resides in the membrane. It catalyses the reaction L-seryl-[protein] + ATP = O-phospho-L-seryl-[protein] + ADP + H(+). The catalysed reaction is L-threonyl-[protein] + ATP = O-phospho-L-threonyl-[protein] + ADP + H(+). Serine/threonine protein kinase. Required for embryonic skin development and correct skin homeostasis in adults, via phosphorylation of PKP1 and subsequent promotion of keratinocyte differentiation and cell adhesion. It is a direct transcriptional target of TP63. Plays a role in NF-kappa-B activation. The sequence is that of Receptor-interacting serine/threonine-protein kinase 4 (RIPK4) from Homo sapiens (Human).